The sequence spans 375 residues: 23S rRNA (uracil(747)-C(5))-methyltransferase RlmC (375 aa).

Cys3, Cys11, Cys14, and Cys87 together coordinate [4Fe-4S] cluster. Gln212, Phe241, Glu262, and Asn307 together coordinate S-adenosyl-L-methionine. Residue Cys334 is the Nucleophile of the active site.

This sequence belongs to the class I-like SAM-binding methyltransferase superfamily. RNA M5U methyltransferase family. RlmC subfamily.

The enzyme catalyses uridine(747) in 23S rRNA + S-adenosyl-L-methionine = 5-methyluridine(747) in 23S rRNA + S-adenosyl-L-homocysteine + H(+). In terms of biological role, catalyzes the formation of 5-methyl-uridine at position 747 (m5U747) in 23S rRNA. The protein is 23S rRNA (uracil(747)-C(5))-methyltransferase RlmC of Escherichia coli O139:H28 (strain E24377A / ETEC).